The sequence spans 80 residues: Exodeoxyribonuclease 7 small subunit (80 aa).

It belongs to the XseB family. Heterooligomer composed of large and small subunits.

Its subcellular location is the cytoplasm. The enzyme catalyses Exonucleolytic cleavage in either 5'- to 3'- or 3'- to 5'-direction to yield nucleoside 5'-phosphates.. Bidirectionally degrades single-stranded DNA into large acid-insoluble oligonucleotides, which are then degraded further into small acid-soluble oligonucleotides. In Rickettsia massiliae (strain Mtu5), this protein is Exodeoxyribonuclease 7 small subunit.